We begin with the raw amino-acid sequence, 699 residues long: Keratinocyte proline-rich protein (699 aa).

A Phosphoserine modification is found at serine 436. Composition is skewed to pro residues over residues 448–477 (PYPR…PSPE) and 513–533 (DPCP…PSPE). The interval 448-533 (PYPRPEPCPS…PCPEPCPSPE (86 aa)) is disordered.

As to expression, expressed in the stratified squamous epithelial layers of the skin, esophagus and tongue.

Its subcellular location is the cytoplasm. In Rattus norvegicus (Rat), this protein is Keratinocyte proline-rich protein (Kprp).